Here is a 449-residue protein sequence, read N- to C-terminus: UDP-N-acetylmuramoylalanine--D-glutamate ligase (449 aa).

Residue 118 to 124 coordinates ATP; the sequence is GTNGKTT.

Belongs to the MurCDEF family.

It localises to the cytoplasm. It carries out the reaction UDP-N-acetyl-alpha-D-muramoyl-L-alanine + D-glutamate + ATP = UDP-N-acetyl-alpha-D-muramoyl-L-alanyl-D-glutamate + ADP + phosphate + H(+). Its pathway is cell wall biogenesis; peptidoglycan biosynthesis. Functionally, cell wall formation. Catalyzes the addition of glutamate to the nucleotide precursor UDP-N-acetylmuramoyl-L-alanine (UMA). In Staphylococcus haemolyticus (strain JCSC1435), this protein is UDP-N-acetylmuramoylalanine--D-glutamate ligase.